The sequence spans 208 residues: Ribosomal RNA large subunit methyltransferase E (208 aa).

Residues glycine 63, tryptophan 65, aspartate 83, aspartate 99, and aspartate 124 each contribute to the S-adenosyl-L-methionine site. Lysine 164 acts as the Proton acceptor in catalysis.

It belongs to the class I-like SAM-binding methyltransferase superfamily. RNA methyltransferase RlmE family.

The protein resides in the cytoplasm. It catalyses the reaction uridine(2552) in 23S rRNA + S-adenosyl-L-methionine = 2'-O-methyluridine(2552) in 23S rRNA + S-adenosyl-L-homocysteine + H(+). Specifically methylates the uridine in position 2552 of 23S rRNA at the 2'-O position of the ribose in the fully assembled 50S ribosomal subunit. The sequence is that of Ribosomal RNA large subunit methyltransferase E from Salmonella agona (strain SL483).